A 345-amino-acid polypeptide reads, in one-letter code: S-adenosylmethionine:tRNA ribosyltransferase-isomerase (345 aa).

It belongs to the QueA family. Monomer.

The protein localises to the cytoplasm. The catalysed reaction is 7-aminomethyl-7-carbaguanosine(34) in tRNA + S-adenosyl-L-methionine = epoxyqueuosine(34) in tRNA + adenine + L-methionine + 2 H(+). The protein operates within tRNA modification; tRNA-queuosine biosynthesis. Functionally, transfers and isomerizes the ribose moiety from AdoMet to the 7-aminomethyl group of 7-deazaguanine (preQ1-tRNA) to give epoxyqueuosine (oQ-tRNA). This chain is S-adenosylmethionine:tRNA ribosyltransferase-isomerase, found in Shewanella sp. (strain MR-7).